The primary structure comprises 192 residues: Calcium-binding protein K (192 aa).

2 consecutive EF-hand domains span residues 60 to 95 (WDEASMVRMFTLFDSDGNGVIDVKEFITALYLMAKA) and 96 to 131 (PTLDKLGFFFDLFDSDKSGYLEREEVDKLVNIVVCC). Residues Asp73, Asp75, Asn77, Glu84, Asp109, Asp111, Ser113, Tyr115, and Glu120 each contribute to the Ca(2+) site.

Belongs to the recoverin family.

The chain is Calcium-binding protein K (cbpK) from Dictyostelium discoideum (Social amoeba).